The chain runs to 171 residues: Ribosome maturation factor RimM (171 aa).

Positions 97–170 (EGEYYYHEVI…QVTIHVMEGL (74 aa)) constitute a PRC barrel domain.

It belongs to the RimM family. Binds ribosomal protein uS19.

The protein resides in the cytoplasm. Functionally, an accessory protein needed during the final step in the assembly of 30S ribosomal subunit, possibly for assembly of the head region. Essential for efficient processing of 16S rRNA. May be needed both before and after RbfA during the maturation of 16S rRNA. It has affinity for free ribosomal 30S subunits but not for 70S ribosomes. The chain is Ribosome maturation factor RimM from Bacillus cytotoxicus (strain DSM 22905 / CIP 110041 / 391-98 / NVH 391-98).